We begin with the raw amino-acid sequence, 232 residues long: Cobalt transport protein CbiM (232 aa).

6 helical membrane-spanning segments follow: residues 6–26, 43–63, 84–104, 107–127, 135–155, and 181–201; these read GFLPPAHAIAWGVASAPFVVH, LLLGASGAFTFVLSALKLPSV, IMAVLGTITLLFQALLLAHGG, TLGANVFSMAIVGPWAGYGVY, VPLMVTVFFGAFVADLSTYCV, and IFAVTQIPLAVSEGLLTVIVM.

This sequence belongs to the CbiM family. In terms of assembly, forms an energy-coupling factor (ECF) transporter complex composed of an ATP-binding protein (A component, CbiO), a transmembrane protein (T component, CbiQ) and 2 possible substrate-capture proteins (S components, CbiM and CbiN) of unknown stoichimetry.

Its subcellular location is the cell membrane. It functions in the pathway cofactor biosynthesis; adenosylcobalamin biosynthesis. In terms of biological role, part of the energy-coupling factor (ECF) transporter complex CbiMNOQ involved in cobalt import. The protein is Cobalt transport protein CbiM of Streptomyces coelicolor (strain ATCC BAA-471 / A3(2) / M145).